Here is a 122-residue protein sequence, read N- to C-terminus: Small ribosomal subunit protein uS13 (122 aa).

The segment at 99–122 is disordered; sequence RGQRTHTNARTRKGPAKAIAGKKK.

This sequence belongs to the universal ribosomal protein uS13 family. As to quaternary structure, part of the 30S ribosomal subunit. Forms a loose heterodimer with protein S19. Forms two bridges to the 50S subunit in the 70S ribosome.

Its function is as follows. Located at the top of the head of the 30S subunit, it contacts several helices of the 16S rRNA. In the 70S ribosome it contacts the 23S rRNA (bridge B1a) and protein L5 of the 50S subunit (bridge B1b), connecting the 2 subunits; these bridges are implicated in subunit movement. Contacts the tRNAs in the A and P-sites. In Bradyrhizobium sp. (strain ORS 278), this protein is Small ribosomal subunit protein uS13.